We begin with the raw amino-acid sequence, 749 residues long: Patatin-like phospholipase domain-containing protein An01g04180 (749 aa).

The segment at 1–21 is disordered; the sequence is MNGAEKSAAGDTYDPSTIPDY. The helical transmembrane segment at 87–107 threads the bilayer; the sequence is WPFLFTVFGWITALAFAYTLT. The PNPLA domain maps to 277–468; the sequence is LCLSGGATFA…RTDIPIKALN (192 aa). Residues 308–312 carry the GXSXG motif; that stretch reads GTSGG. Residue Ser-310 is the Nucleophile of the active site. The Proton acceptor role is filled by Asp-455. The segment at 619–726 is disordered; sequence AGGRPISPAP…STGSSIFEEV (108 aa). The segment covering 649–664 has biased composition (basic and acidic residues); the sequence is PLNERLDHNLPERRGD. Residues 685–707 show a composition bias toward low complexity; it reads SLSENSSNESAARPSSSSSSSRL.

The protein belongs to the PLPL family.

Its subcellular location is the membrane. Probable lipid hydrolase. This is Patatin-like phospholipase domain-containing protein An01g04180 from Aspergillus niger (strain ATCC MYA-4892 / CBS 513.88 / FGSC A1513).